Here is a 185-residue protein sequence, read N- to C-terminus: Ribosome-recycling factor (185 aa).

It belongs to the RRF family.

The protein localises to the cytoplasm. In terms of biological role, responsible for the release of ribosomes from messenger RNA at the termination of protein biosynthesis. May increase the efficiency of translation by recycling ribosomes from one round of translation to another. The chain is Ribosome-recycling factor from Xylella fastidiosa (strain 9a5c).